A 523-amino-acid chain; its full sequence is Mitochondrial distribution and morphology protein 34 (523 aa).

The 200-residue stretch at 1–200 (MSFKVNWKSL…LPTLIHQFSL (200 aa)) folds into the SMP-LTD domain. Residues 489-523 (ELSMDRSGKRKQRNYGSATYESENPIVAPPPPYSH) form a disordered region.

It belongs to the MDM34 family. As to quaternary structure, component of the ER-mitochondria encounter structure (ERMES) or MDM complex, composed of MMM1, MDM10, MDM12 and MDM34.

Its subcellular location is the mitochondrion outer membrane. Its function is as follows. Component of the ERMES/MDM complex, which serves as a molecular tether to connect the endoplasmic reticulum (ER) and mitochondria. Components of this complex are involved in the control of mitochondrial shape and protein biogenesis, and function in nonvesicular lipid trafficking between the ER and mitochondria. MDM34 is required for the interaction of the ER-resident membrane protein MMM1 and the outer mitochondrial membrane-resident beta-barrel protein MDM10. This chain is Mitochondrial distribution and morphology protein 34, found in Scheffersomyces stipitis (strain ATCC 58785 / CBS 6054 / NBRC 10063 / NRRL Y-11545) (Yeast).